Reading from the N-terminus, the 201-residue chain is Small ribosomal subunit protein uS5 (201 aa).

Residues 1-28 (MAHQNEQRGGGDRGRGRGRGRDRDQERD) are disordered. An S5 DRBM domain is found at 31–94 (LVDKLVHINR…DEAKKNMIRV (64 aa)). The interval 173 to 201 (SVAAKRGLKVGDLVNRRDDGASSPEAIEA) is disordered.

It belongs to the universal ribosomal protein uS5 family. As to quaternary structure, part of the 30S ribosomal subunit. Contacts proteins S4 and S8.

Its function is as follows. With S4 and S12 plays an important role in translational accuracy. Functionally, located at the back of the 30S subunit body where it stabilizes the conformation of the head with respect to the body. The polypeptide is Small ribosomal subunit protein uS5 (Maricaulis maris (strain MCS10) (Caulobacter maris)).